The sequence spans 249 residues: MTIPDLTAKVVLVDIEGTTTSISFVHEVLFPYAKQNAEHYLLETWETDATKQIVQDLQLLPQFAEYASTLGTQPAVDAQLIAGFVRYLIERDLKVTPLKTLQGLIWAKGYASGQLRGHVYEDVATAFHTWREAGLRIAVYSSGSVAAQKLIFQHSIAGDLLPHLSAHFDTHVGHKQQTESYTKISQILQVEPQHVLFLTDVPLEAAAARAAGMLTILLQRPGNVPLSEEERSSYPVVEDFVALHTLKQP.

The Mg(2+) site is built by D14 and E16. Substrate is bound by residues 141 to 142 (SS) and K175. D200 provides a ligand contact to Mg(2+).

Belongs to the HAD-like hydrolase superfamily. MasA/MtnC family. In terms of assembly, monomer. Requires Mg(2+) as cofactor.

The protein localises to the cytoplasm. It localises to the nucleus. The enzyme catalyses 5-methylsulfanyl-2,3-dioxopentyl phosphate + H2O = 1,2-dihydroxy-5-(methylsulfanyl)pent-1-en-3-one + phosphate. It functions in the pathway amino-acid biosynthesis; L-methionine biosynthesis via salvage pathway; L-methionine from S-methyl-5-thio-alpha-D-ribose 1-phosphate: step 3/6. Its pathway is amino-acid biosynthesis; L-methionine biosynthesis via salvage pathway; L-methionine from S-methyl-5-thio-alpha-D-ribose 1-phosphate: step 4/6. Bifunctional enzyme that catalyzes the enolization of 2,3-diketo-5-methylthiopentyl-1-phosphate (DK-MTP-1-P) into the intermediate 2-hydroxy-3-keto-5-methylthiopentenyl-1-phosphate (HK-MTPenyl-1-P), which is then dephosphorylated to form the acireductone 1,2-dihydroxy-3-keto-5-methylthiopentene (DHK-MTPene). This is Enolase-phosphatase E1 from Drosophila virilis (Fruit fly).